The primary structure comprises 563 residues: Arginine--tRNA ligase (563 aa).

The short motif at 121–131 (PNIAKPFSIGH) is the 'HIGH' region element.

It belongs to the class-I aminoacyl-tRNA synthetase family. In terms of assembly, monomer.

The protein localises to the cytoplasm. It carries out the reaction tRNA(Arg) + L-arginine + ATP = L-arginyl-tRNA(Arg) + AMP + diphosphate. The sequence is that of Arginine--tRNA ligase from Streptococcus pyogenes serotype M3 (strain ATCC BAA-595 / MGAS315).